Here is a 156-residue protein sequence, read N- to C-terminus: ATP synthase subunit b (156 aa).

Residues 7–27 (LFVQAIVFLILVLFTMKFVWP) form a helical membrane-spanning segment.

Belongs to the ATPase B chain family. As to quaternary structure, F-type ATPases have 2 components, F(1) - the catalytic core - and F(0) - the membrane proton channel. F(1) has five subunits: alpha(3), beta(3), gamma(1), delta(1), epsilon(1). F(0) has three main subunits: a(1), b(2) and c(10-14). The alpha and beta chains form an alternating ring which encloses part of the gamma chain. F(1) is attached to F(0) by a central stalk formed by the gamma and epsilon chains, while a peripheral stalk is formed by the delta and b chains.

It localises to the cell inner membrane. Its function is as follows. F(1)F(0) ATP synthase produces ATP from ADP in the presence of a proton or sodium gradient. F-type ATPases consist of two structural domains, F(1) containing the extramembraneous catalytic core and F(0) containing the membrane proton channel, linked together by a central stalk and a peripheral stalk. During catalysis, ATP synthesis in the catalytic domain of F(1) is coupled via a rotary mechanism of the central stalk subunits to proton translocation. Functionally, component of the F(0) channel, it forms part of the peripheral stalk, linking F(1) to F(0). This is ATP synthase subunit b from Paracidovorax citrulli (strain AAC00-1) (Acidovorax citrulli).